A 283-amino-acid chain; its full sequence is Pseudokinase OPG198 (283 aa).

2 residues coordinate ATP: Met1 and Lys30. A Protein kinase domain is found at Met1–Asp283.

This sequence belongs to the protein kinase superfamily. Ser/Thr protein kinase family. Poxviruses subfamily. In terms of assembly, interacts with B1/VPK1. Interacts with host VRK1. Interacts with host VRK2.

The protein resides in the host nucleus. Both catalytically active kinases B1/VPK1 and host VRK2 repress B12 inhibitory activity in a B1/VPK1 deletion mutant strain. Its function is as follows. Pseudokinase that plays a role in viral DNA replication repression by activating the antiviral protein BANF1 and inhibiting the activity of host VRK1, a cellular modulator of BANF1. This is Pseudokinase OPG198 (OPG198) from Homo sapiens (Human).